A 387-amino-acid polypeptide reads, in one-letter code: Deoxyhypusine synthase (387 aa).

NAD(+) contacts are provided by residues 108-112 (SNLIS), 134-136 (SAG), Glu140, and Asp257. 139-140 (EE) is a binding site for spermidine. Asp262 provides a ligand contact to spermidine. Gly304 lines the NAD(+) pocket. Residue His309 coordinates spermidine. NAD(+) is bound at residue 329-330 (TG). Residues 335–337 (GSD) and 344–350 (EAVSWGK) contribute to the spermidine site. The active-site Nucleophile is Lys350. Position 363 to 364 (363 to 364 (DV)) interacts with NAD(+).

The protein belongs to the deoxyhypusine synthase family. As to quaternary structure, homotetramer. Requires NAD(+) as cofactor.

It carries out the reaction [eIF5A protein]-L-lysine + spermidine = [eIF5A protein]-deoxyhypusine + propane-1,3-diamine. It functions in the pathway protein modification; eIF5A hypusination. Its function is as follows. Catalyzes the NAD-dependent oxidative cleavage of spermidine and the subsequent transfer of the butylamine moiety of spermidine to the epsilon-amino group of a specific lysine residue of the eIF-5A precursor protein to form the intermediate deoxyhypusine residue. The sequence is that of Deoxyhypusine synthase from Saccharomyces cerevisiae (strain ATCC 204508 / S288c) (Baker's yeast).